The chain runs to 137 residues: Large ribosomal subunit protein uL16 (137 aa).

The protein belongs to the universal ribosomal protein uL16 family. In terms of assembly, part of the 50S ribosomal subunit.

In terms of biological role, binds 23S rRNA and is also seen to make contacts with the A and possibly P site tRNAs. In Lawsonia intracellularis (strain PHE/MN1-00), this protein is Large ribosomal subunit protein uL16.